A 561-amino-acid chain; its full sequence is Mercuric reductase (561 aa).

The 64-residue stretch at 2–65 (THLKITGMTC…AVAGLGYKAT (64 aa)) folds into the HMA domain. The a metal cation site is built by cysteine 11 and cysteine 14. FAD-binding residues include alanine 110, glycine 130, and threonine 135. Cysteine 136 and cysteine 141 are oxidised to a cystine. Residues lysine 145, alanine 211, aspartate 403, and valine 411 each coordinate FAD. The Hg(2+) site is built by cysteine 558 and cysteine 559.

Belongs to the class-I pyridine nucleotide-disulfide oxidoreductase family. Homodimer. It depends on FAD as a cofactor.

It carries out the reaction Hg + NADP(+) + H(+) = Hg(2+) + NADPH. In terms of biological role, resistance to Hg(2+) in bacteria appears to be governed by a specialized system which includes mercuric reductase. MerA protein is responsible for volatilizing mercury as Hg(0). Plays a pivotal role in mercury resistance under thiol-depleted conditions and cell protection. Protects cells under thiol-depleted conditions. The polypeptide is Mercuric reductase (merA) (Pseudomonas aeruginosa).